The chain runs to 295 residues: Small ribosomal subunit protein mS23 (295 aa).

Positions 249 to 295 (IGSVVEEEKSQSSLFEDLLSNDNLQSEPEVEQSGQQQQQEQPKQETN) are disordered. Positions 273–289 (QSEPEVEQSGQQQQQEQ) are enriched in low complexity.

This sequence belongs to the mitochondrion-specific ribosomal protein mS23 family. In terms of assembly, component of the mitochondrial small ribosomal subunit (mt-SSU).

Its subcellular location is the mitochondrion. Its function is as follows. Component of the mitochondrial ribosome (mitoribosome), a dedicated translation machinery responsible for the synthesis of mitochondrial genome-encoded proteins, including at least some of the essential transmembrane subunits of the mitochondrial respiratory chain. The mitoribosomes are attached to the mitochondrial inner membrane and translation products are cotranslationally integrated into the membrane. The sequence is that of Small ribosomal subunit protein mS23 (RSM25) from Candida albicans (strain SC5314 / ATCC MYA-2876) (Yeast).